A 196-amino-acid chain; its full sequence is MGLELPLVLGTSSVFRREQMERLGIAFQAASPDFDETPMLGESAPQTALRLAEGKARSLTGRFPGALIVGADQVAWCDGRQWGKPMNLANAQKMLMHLSGREIEFYSAVVLLNTVTGRMHRHIDKTVVVMRQLDELHILRYLEREPDAVYCSCAAKSEGLGALLIERIESTDPNALIGLPVFRLVDFLKNEGVDVL.

Asp72 functions as the Proton acceptor in the catalytic mechanism.

This sequence belongs to the Maf family. YceF subfamily. A divalent metal cation serves as cofactor.

It localises to the cytoplasm. The catalysed reaction is N(7)-methyl-GTP + H2O = N(7)-methyl-GMP + diphosphate + H(+). Nucleoside triphosphate pyrophosphatase that hydrolyzes 7-methyl-GTP (m(7)GTP). May have a dual role in cell division arrest and in preventing the incorporation of modified nucleotides into cellular nucleic acids. The polypeptide is 7-methyl-GTP pyrophosphatase (Neisseria gonorrhoeae (strain ATCC 700825 / FA 1090)).